The chain runs to 493 residues: Galactose-1-phosphate uridylyltransferase (493 aa).

The protein belongs to the galactose-1-phosphate uridylyltransferase type 2 family.

The protein resides in the cytoplasm. The catalysed reaction is alpha-D-galactose 1-phosphate + UDP-alpha-D-glucose = alpha-D-glucose 1-phosphate + UDP-alpha-D-galactose. The protein operates within carbohydrate metabolism; galactose metabolism. The protein is Galactose-1-phosphate uridylyltransferase of Streptococcus thermophilus (strain ATCC BAA-250 / LMG 18311).